The following is a 334-amino-acid chain: UDP-N-acetylglucosamine 4,6-dehydratase (inverting) (334 aa).

NADP(+) is bound by residues 13-16 (TGSF), 37-42 (SRDELK), 61-62 (DV), Ala-81, Lys-85, and 123-124 (LS). Lys-85 lines the substrate pocket. Lys-127 is a catalytic residue. The NADP(+) site is built by Tyr-135 and Lys-139. Asn-167 lines the substrate pocket. 168 to 172 (VVGSR) serves as a coordination point for NADP(+). Positions 175, 193, 252, and 255 each coordinate substrate.

Belongs to the polysaccharide synthase family. In terms of assembly, homohexamer. It depends on NADP(+) as a cofactor.

The catalysed reaction is UDP-N-acetyl-alpha-D-glucosamine = UDP-2-acetamido-2,6-dideoxy-beta-L-arabino-hex-4-ulose + H2O. In terms of biological role, catalyzes the first step in the biosynthesis of pseudaminic acid, a sialic-acid-like sugar that is used to modify flagellin. Has both C6 dehydratase and C5 epimerase activities that result in the production of both UDP-2-acetamido-2,6-dideoxy-beta-L-arabino-4-hexulose and UDP-2-acetamido-2,6-dideoxy-alpha-D-xylo-4-hexulose. The sequence is that of UDP-N-acetylglucosamine 4,6-dehydratase (inverting) (pseB) from Campylobacter jejuni subsp. jejuni serotype O:2 (strain ATCC 700819 / NCTC 11168).